The sequence spans 902 residues: Potassium/sodium hyperpolarization-activated cyclic nucleotide-gated channel 1 (902 aa).

Positions 1–75 (MEGGGKPNSA…PAGSFEDAEG (75 aa)) are disordered. Residues 1–131 (MEGGGKPNSA…WIIHPYSDFR (131 aa)) lie on the Cytoplasmic side of the membrane. A helical transmembrane segment spans residues 132 to 153 (FYWDLIMLIMMVGNLVIIPVGI). Over 154-162 (TFFTEQTTT) the chain is Extracellular. The helical transmembrane segment at 163–183 (PWIIFNVASDTVFLLDLIMNF) threads the bilayer. At 184–204 (RTGTVNEDSSEIILDPKVIKM) the chain is on the cytoplasmic side. Residues 205–225 (NYLKSWFVVDFISSIPVDYIF) traverse the membrane as a helical segment. Residues 226-249 (LIVEKGMDSEVYKTARALRIVRFT) lie on the Extracellular side of the membrane. The helical; Voltage-sensor transmembrane segment at 250–270 (KILSLLRLLRLSRLIRYIHQW) threads the bilayer. Over 271–284 (EEIFHMTYDLASAV) the chain is Cytoplasmic. The chain crosses the membrane as a helical span at residues 285-307 (VRIFNLIGMMLLLCHWDGCLQFL). Residues 308-333 (VPLLQDFPPDCWVSLNEMVNDSWGKQ) are Extracellular-facing. Asparagine 327 carries N-linked (GlcNAc...) asparagine glycosylation. The pore-forming intramembrane region spans 334–355 (YSYALFKAMSHMLCIGYGAQAP). The Selectivity filter signature appears at 347–351 (CIGYG). At 356–360 (VSMSD) the chain is on the extracellular side. A helical transmembrane segment spans residues 361 to 381 (LWITMLSMIVGATCYAMFVGH). The Cytoplasmic portion of the chain corresponds to 382 to 902 (ATALIQSLDS…AEKPRFASNL (521 aa)). Residues glycine 528, glutamate 529, cysteine 531, arginine 538, threonine 539, arginine 579, and arginine 582 each contribute to the 3',5'-cyclic AMP site. Disordered stretches follow at residues 634–681 (TALN…QPSA), 713–824 (ASQL…VGES), and 858–902 (MSSG…ASNL). Composition is skewed to low complexity over residues 639–680 (TSST…PQPS), 720–736 (QQPQPQLQQSQVQQTQP), and 744–769 (QPQQQQQQQQQQQQQQQQQQQQQQPQ). Positions 770–793 (TPGSSTPKNEVHKSTQALHNTNLT) are enriched in polar residues. The span at 867–877 (RGVPPAPPPPA) shows a compositional bias: pro residues. The segment covering 889–902 (KDPDAEKPRFASNL) has biased composition (basic and acidic residues).

Belongs to the potassium channel HCN family. In terms of assembly, homotetramer. Heterotetramer with HCN2. The potassium channel is composed of a homo- or heterotetrameric complex of pore-forming subunits. Interacts with KCNE2. Interacts with the SH3 domain of CSK. Highly expressed in cerebral cortex, cerebellum, throughout the hippocampus, in medial habenula, anterior dorsal nucleus in the thalamus, tenia tecta, several nuclei of the general motor system and in optic nerve layer. Detected in a subset of elongated cells in taste buds.

The protein localises to the cell membrane. It carries out the reaction Na(+)(in) = Na(+)(out). The catalysed reaction is K(+)(in) = K(+)(out). With respect to regulation, activated by cAMP, and at 10-100 times higher concentrations, also by cGMP. cAMP binding promotes tetramerization and formation of an active channel. Compared to other family members, cAMP has less stimulatory effect on HCN1 because part of the molecules already contain bound cAMP and form homotetramers when cAMP levels are low, this inherent tetramerization in HCN1 results in a weaker response to increased cAMP. Hyperpolarization-activated ion channel that are permeable to sodium and potassium ions. Exhibits weak selectivity for potassium over sodium ions. Contributes to the native pacemaker currents in heart (If) and in neurons (Ih). Participates in cerebellar mechanisms of motor learning. May mediate responses to sour stimuli. In Rattus norvegicus (Rat), this protein is Potassium/sodium hyperpolarization-activated cyclic nucleotide-gated channel 1 (Hcn1).